We begin with the raw amino-acid sequence, 329 residues long: Lipoyl synthase (329 aa).

The tract at residues 1-23 is disordered; sequence MTDLTATPAPAEPAASAYDPTAK. Residues C76, C81, C87, C102, C106, C109, and S316 each contribute to the [4Fe-4S] cluster site. The 219-residue stretch at 87 to 305 folds into the Radical SAM core domain; that stretch reads CFGKGTATFM…EEEAYKMGFT (219 aa).

This sequence belongs to the radical SAM superfamily. Lipoyl synthase family. The cofactor is [4Fe-4S] cluster.

Its subcellular location is the cytoplasm. It catalyses the reaction [[Fe-S] cluster scaffold protein carrying a second [4Fe-4S](2+) cluster] + N(6)-octanoyl-L-lysyl-[protein] + 2 oxidized [2Fe-2S]-[ferredoxin] + 2 S-adenosyl-L-methionine + 4 H(+) = [[Fe-S] cluster scaffold protein] + N(6)-[(R)-dihydrolipoyl]-L-lysyl-[protein] + 4 Fe(3+) + 2 hydrogen sulfide + 2 5'-deoxyadenosine + 2 L-methionine + 2 reduced [2Fe-2S]-[ferredoxin]. Its pathway is protein modification; protein lipoylation via endogenous pathway; protein N(6)-(lipoyl)lysine from octanoyl-[acyl-carrier-protein]: step 2/2. Its function is as follows. Catalyzes the radical-mediated insertion of two sulfur atoms into the C-6 and C-8 positions of the octanoyl moiety bound to the lipoyl domains of lipoate-dependent enzymes, thereby converting the octanoylated domains into lipoylated derivatives. The protein is Lipoyl synthase of Burkholderia pseudomallei (strain 1106a).